Reading from the N-terminus, the 294-residue chain is Phosphatidylserine decarboxylase proenzyme (294 aa).

Residues Asp100, His157, and Ser261 each act as charge relay system; for autoendoproteolytic cleavage activity in the active site. The active-site Schiff-base intermediate with substrate; via pyruvic acid; for decarboxylase activity is the Ser261. A Pyruvic acid (Ser); by autocatalysis modification is found at Ser261.

Belongs to the phosphatidylserine decarboxylase family. PSD-B subfamily. Prokaryotic type I sub-subfamily. As to quaternary structure, heterodimer of a large membrane-associated beta subunit and a small pyruvoyl-containing alpha subunit. Requires pyruvate as cofactor. Is synthesized initially as an inactive proenzyme. Formation of the active enzyme involves a self-maturation process in which the active site pyruvoyl group is generated from an internal serine residue via an autocatalytic post-translational modification. Two non-identical subunits are generated from the proenzyme in this reaction, and the pyruvate is formed at the N-terminus of the alpha chain, which is derived from the carboxyl end of the proenzyme. The autoendoproteolytic cleavage occurs by a canonical serine protease mechanism, in which the side chain hydroxyl group of the serine supplies its oxygen atom to form the C-terminus of the beta chain, while the remainder of the serine residue undergoes an oxidative deamination to produce ammonia and the pyruvoyl prosthetic group on the alpha chain. During this reaction, the Ser that is part of the protease active site of the proenzyme becomes the pyruvoyl prosthetic group, which constitutes an essential element of the active site of the mature decarboxylase.

The protein resides in the cell membrane. The catalysed reaction is a 1,2-diacyl-sn-glycero-3-phospho-L-serine + H(+) = a 1,2-diacyl-sn-glycero-3-phosphoethanolamine + CO2. Its pathway is phospholipid metabolism; phosphatidylethanolamine biosynthesis; phosphatidylethanolamine from CDP-diacylglycerol: step 2/2. Its function is as follows. Catalyzes the formation of phosphatidylethanolamine (PtdEtn) from phosphatidylserine (PtdSer). This is Phosphatidylserine decarboxylase proenzyme from Histophilus somni (strain 2336) (Haemophilus somnus).